Consider the following 349-residue polypeptide: Cyclic amide hydrolase (349 aa).

Residues 1–90 (MTSPEDTAGV…AVFVDDPASS (90 aa)) are RU A. Residue Arg38 participates in substrate binding. An RU B region spans residues 99–231 (GLSIGVTTTA…AAVLVMGNSP (133 aa)). Lys149 is a catalytic residue. Residues Arg176, 214–215 (SA), Lys311, and 330–331 (SG) each bind substrate. The Nucleophile role is filled by Ser214. Residues 237 to 349 (YRIGHGVLRD…GGGTVAVIAR (113 aa)) form an RU C region.

This sequence belongs to the cyclic amide hydrolase (CyAH) family. In terms of assembly, homotetramer.

Functionally, cyclic amide hydrolase of unknown substrate specificity. Catalyzes the hydrolytic ring-opening of a cyclic amide. Does not act on cyanuric acid nor barbituric acid. This chain is Cyclic amide hydrolase, found in Rhodococcus sp.